Consider the following 477-residue polypeptide: Glycogen synthase (477 aa).

An ADP-alpha-D-glucose-binding site is contributed by Lys-15.

It belongs to the glycosyltransferase 1 family. Bacterial/plant glycogen synthase subfamily.

It carries out the reaction [(1-&gt;4)-alpha-D-glucosyl](n) + ADP-alpha-D-glucose = [(1-&gt;4)-alpha-D-glucosyl](n+1) + ADP + H(+). Its pathway is glycan biosynthesis; glycogen biosynthesis. Its function is as follows. Synthesizes alpha-1,4-glucan chains using ADP-glucose. This is Glycogen synthase from Erwinia tasmaniensis (strain DSM 17950 / CFBP 7177 / CIP 109463 / NCPPB 4357 / Et1/99).